A 351-amino-acid chain; its full sequence is N-terminal EF-hand calcium-binding protein 1 (351 aa).

Phosphoserine is present on Ser-4. 2 consecutive EF-hand domains span residues 26–61 (KGMS…GVLS) and 60–95 (LSGE…HLGE). Residues Asp-39, Asn-41, Asp-43, Lys-45, and Glu-50 each coordinate Ca(2+). Residues 135–163 (LLKETLNQLQSLQNSLECAMETTEEQTRQ) adopt a coiled-coil conformation. The tract at residues 180-203 (GKRSSRRVQRHNSFSPNSPQFNVS) is disordered. The segment covering 190 to 202 (HNSFSPNSPQFNV) has biased composition (polar residues). 2 positions are modified to phosphoserine: Ser-192 and Ser-197. Positions 209–275 (EEDNQWMTQI…EEFQLALKHY (67 aa)) form a coiled coil. Positions 252 to 340 (MLVQRQMSVI…LETPELTSTM (89 aa)) constitute an ABM domain.

Interacts with STX1. May interact with CPNE6. As to expression, expressed in brain (at protein level).

Its subcellular location is the cytoplasm. The protein is N-terminal EF-hand calcium-binding protein 1 (NECAB1) of Homo sapiens (Human).